We begin with the raw amino-acid sequence, 347 residues long: Protein RecA (347 aa).

Residue Gly65 to Thr72 participates in ATP binding. The interval Lys325–Glu347 is disordered. Basic and acidic residues predominate over residues Asp338–Glu347.

Belongs to the RecA family.

The protein localises to the cytoplasm. Functionally, can catalyze the hydrolysis of ATP in the presence of single-stranded DNA, the ATP-dependent uptake of single-stranded DNA by duplex DNA, and the ATP-dependent hybridization of homologous single-stranded DNAs. It interacts with LexA causing its activation and leading to its autocatalytic cleavage. The sequence is that of Protein RecA from Staphylococcus aureus (strain Mu3 / ATCC 700698).